The chain runs to 635 residues: PTS system mannitol-specific EIICBA component (635 aa).

One can recognise a PTS EIIC type-2 domain in the interval 12 to 342 (FGRFLSNMVM…LFKTSKVKER (331 aa)). The next 6 helical transmembrane spans lie at 24-45 (IGAFIAWGIITALFIPTGWLPN), 50-70 (KLVGPMITYLLPLLIGYTGGK), 134-155 (SAGIIGMILAILAFLGIGPAVE), 165-185 (VNFMVAHDMLPLASIFVEPAK), 273-292 (VILGGMTGVFTLTILNGGLV), and 313-334 (FANIAAIIAAMAVSFVVSAVLF). The region spanning 378-473 (RKIIVACDAG…RLVAAQRHID (96 aa)) is the PTS EIIB type-2 domain. Cysteine 384 functions as the Phosphocysteine intermediate; for EIIB activity in the catalytic mechanism. Phosphocysteine; by EIIA is present on cysteine 384. The 142-residue stretch at 494–635 (FQLGADNIFL…VDEVLALLNK (142 aa)) folds into the PTS EIIA type-2 domain. Histidine 554 functions as the Tele-phosphohistidine intermediate; for EIIA activity in the catalytic mechanism. At histidine 554 the chain carries Phosphohistidine; by HPr.

As to quaternary structure, homodimer. Post-translationally, an intramolecular phosphotransfer takes places between His-554 and Cys-384.

The protein resides in the cell inner membrane. The enzyme catalyses D-mannitol(out) + N(pros)-phospho-L-histidyl-[protein] = D-mannitol 1-phosphate(in) + L-histidyl-[protein]. In terms of biological role, the phosphoenolpyruvate-dependent sugar phosphotransferase system (sugar PTS), a major carbohydrate active transport system, catalyzes the phosphorylation of incoming sugar substrates concomitantly with their translocation across the cell membrane. This system is involved in D-mannitol transport. This is PTS system mannitol-specific EIICBA component from Klebsiella pneumoniae.